Here is a 342-residue protein sequence, read N- to C-terminus: MDILKAEIARKRKLIEEKELIDDSKKYFKRAELARKEEEDYYRRCGYKMDKPEEEAPQSTSANPVLELELTEEKLPMTLSRQEVIRRLRERGEPIRLFGESDYDAFQRLRKIEILAPEVNKGLRNDLKAAMDKIDQQYLNEIVGGAEGAELDTQHDLKVHEENTTIEELEALGASLGNGNDVRDMDIINKVLRFLLGVWAKDLNSREDHIKRSVQGKLASATQKQTESYLEPLFRKLRKKNLPADIKESITDIIKFMLEREYVKANDAYLQMAIGNAPWPIGVTMVGIHARTGREKIFSKHVAHVLNDETQRKYIQGLKRLMTICQKHFPTDPSKCVEYNAL.

Belongs to the PRP18 family. In terms of assembly, interacts with the spliceosome. Part of a complex containing U4/U6 snRNPs.

Its subcellular location is the nucleus speckle. Participates in the second step of pre-mRNA splicing. The chain is Pre-mRNA-splicing factor 18 (prpf18) from Danio rerio (Zebrafish).